A 251-amino-acid polypeptide reads, in one-letter code: Flap endonuclease Xni (251 aa).

Asp104 is a Mg(2+) binding site. Residues 160–249 form the 5'-3' exonuclease domain; sequence VLPQQLPDYW…IDGNLQQLRL (90 aa). Residues Leu171, Ala172, Pro180, Val182, and Ile185 each coordinate K(+). The interval 184–189 is interaction with DNA; that stretch reads GIGPKS.

Belongs to the Xni family. The cofactor is Mg(2+). K(+) is required as a cofactor.

Its function is as follows. Has flap endonuclease activity. During DNA replication, flap endonucleases cleave the 5'-overhanging flap structure that is generated by displacement synthesis when DNA polymerase encounters the 5'-end of a downstream Okazaki fragment. The chain is Flap endonuclease Xni from Citrobacter koseri (strain ATCC BAA-895 / CDC 4225-83 / SGSC4696).